The primary structure comprises 161 residues: Putative 4-hydroxy-4-methyl-2-oxoglutarate aldolase (161 aa).

Substrate contacts are provided by residues 75–78 (GDNL) and R97. Residue D98 participates in a divalent metal cation binding.

Belongs to the class II aldolase/RraA-like family. In terms of assembly, homotrimer. A divalent metal cation serves as cofactor.

It catalyses the reaction 4-hydroxy-4-methyl-2-oxoglutarate = 2 pyruvate. It carries out the reaction oxaloacetate + H(+) = pyruvate + CO2. Its function is as follows. Catalyzes the aldol cleavage of 4-hydroxy-4-methyl-2-oxoglutarate (HMG) into 2 molecules of pyruvate. Also contains a secondary oxaloacetate (OAA) decarboxylase activity due to the common pyruvate enolate transition state formed following C-C bond cleavage in the retro-aldol and decarboxylation reactions. The sequence is that of Putative 4-hydroxy-4-methyl-2-oxoglutarate aldolase from Alkalilimnicola ehrlichii (strain ATCC BAA-1101 / DSM 17681 / MLHE-1).